Here is a 439-residue protein sequence, read N- to C-terminus: Orphan methyltransferase M.SPRI (439 aa).

In terms of domain architecture, SAM-dependent MTase C5-type spans 4-436 (LRVMSLFSGI…KELIHTYINK (433 aa)). The active site involves cysteine 78.

This sequence belongs to the class I-like SAM-binding methyltransferase superfamily. C5-methyltransferase family. Monomer.

It carries out the reaction a 2'-deoxycytidine in DNA + S-adenosyl-L-methionine = a 5-methyl-2'-deoxycytidine in DNA + S-adenosyl-L-homocysteine + H(+). Functionally, a methyltransferase that methylates the C-1 in the sequence 5'-GGCC-3' and both cytosines in the sequence 5'-CCGG-3'. A methyltransferase that methylates C-3 within the sequence 5'-GGCC-3', C-1 in 5'-CCGG-3' and C-2 in 5'-CCWGG-3'. Modification confers resistance against restriction enzymes that recognize these sequences. This is Orphan methyltransferase M.SPRI from Bacillus phage SPR (Bacteriophage SPR).